We begin with the raw amino-acid sequence, 292 residues long: uncharacterized protein (292 aa).

Active-site charge relay system residues include Thr-43 and Tyr-105. Tyr-131 acts as the Proton donor in catalysis. Lys-159 (schiff-base intermediate with substrate) is an active-site residue.

This sequence belongs to the DapA family. Homotetramer.

The protein resides in the cytoplasm. This is an uncharacterized protein from Thermococcus kodakarensis (strain ATCC BAA-918 / JCM 12380 / KOD1) (Pyrococcus kodakaraensis (strain KOD1)).